A 133-amino-acid chain; its full sequence is ATP synthase epsilon chain, chloroplastic (133 aa).

This sequence belongs to the ATPase epsilon chain family. In terms of assembly, F-type ATPases have 2 components, CF(1) - the catalytic core - and CF(0) - the membrane proton channel. CF(1) has five subunits: alpha(3), beta(3), gamma(1), delta(1), epsilon(1). CF(0) has three main subunits: a, b and c.

The protein localises to the plastid. It is found in the chloroplast thylakoid membrane. Its function is as follows. Produces ATP from ADP in the presence of a proton gradient across the membrane. This Mesostigma viride (Green alga) protein is ATP synthase epsilon chain, chloroplastic.